The primary structure comprises 153 residues: Heavy metal-associated isoprenylated plant protein 26 (153 aa).

The HMA domain occupies 25–89 (LQTVEIKVKM…MSHRTGKKVE (65 aa)). Cys-36 and Cys-39 together coordinate a metal cation. The residue at position 150 (Cys-150) is a Cysteine methyl ester. Cys-150 carries the S-farnesyl cysteine lipid modification. Residues 151–153 (VVM) constitute a propeptide, removed in mature form.

The protein belongs to the HIPP family. Interacts with ZHD11/HB29 and ACBP2 (via ankyrin repeats). May also interact with HB21. In terms of tissue distribution, expressed in roots, stems and flowers. Lower expression in siliques and leaves. Expressed in the vascular tissues. Detected in lateral roots, shoot apical meristem, petals of unopened flowers and weak expression in leaf vasculature.

Its subcellular location is the nucleus membrane. The protein localises to the cell membrane. Its function is as follows. Heavy-metal-binding protein. Binds lead, cadmium and copper. May be involved in heavy-metal transport. May be involved in cadmium transport and play a role in cadmium detoxification. This is Heavy metal-associated isoprenylated plant protein 26 from Arabidopsis thaliana (Mouse-ear cress).